Reading from the N-terminus, the 166-residue chain is Interferon gamma (166 aa).

The first 23 residues, 1-23, serve as a signal peptide directing secretion; it reads MNYTSYILAFQLCVILGSSGCYC. Gln24 is modified (pyrrolidone carboxylic acid). N-linked (GlcNAc...) asparagine glycans are attached at residues Asn39 and Asn106. The tract at residues 147–166 is disordered; it reads SNLRKRKRRQNQIQGRRASK.

It belongs to the type II (or gamma) interferon family. Homodimer. Interacts with IFNGR1 (via extracellular domain); this interaction promotes IFNGR1 dimerization. In terms of tissue distribution, released primarily from activated T lymphocytes.

It localises to the secreted. Type II interferon produced by immune cells such as T-cells and NK cells that plays crucial roles in antimicrobial, antiviral, and antitumor responses by activating effector immune cells and enhancing antigen presentation. Primarily signals through the JAK-STAT pathway after interaction with its receptor IFNGR1 to affect gene regulation. Upon IFNG binding, IFNGR1 intracellular domain opens out to allow association of downstream signaling components JAK2, JAK1 and STAT1, leading to STAT1 activation, nuclear translocation and transcription of IFNG-regulated genes. Many of the induced genes are transcription factors such as IRF1 that are able to further drive regulation of a next wave of transcription. Plays a role in class I antigen presentation pathway by inducing a replacement of catalytic proteasome subunits with immunoproteasome subunits. In turn, increases the quantity, quality, and repertoire of peptides for class I MHC loading. Increases the efficiency of peptide generation also by inducing the expression of activator PA28 that associates with the proteasome and alters its proteolytic cleavage preference. Up-regulates as well MHC II complexes on the cell surface by promoting expression of several key molecules such as cathepsins B/CTSB, H/CTSH, and L/CTSL. Participates in the regulation of hematopoietic stem cells during development and under homeostatic conditions by affecting their development, quiescence, and differentiation. The sequence is that of Interferon gamma (IFNG) from Lama glama (Llama).